Reading from the N-terminus, the 507-residue chain is UDP-N-acetylhexosamine pyrophosphorylase-like protein 1 (507 aa).

The short motif at 111-114 (LAGG) is the Substrate binding element. Residues 111 to 114 (LAGG), K125, Q199, and G225 contribute to the UTP site. N226 provides a ligand contact to substrate. A UTP-binding site is contributed by D256. A Substrate binding motif is present at residues 306–307 (EY). K380 lines the UTP pocket. K410 lines the substrate pocket.

The protein belongs to the UDPGP type 1 family.

This is UDP-N-acetylhexosamine pyrophosphorylase-like protein 1 (Uap1l1) from Mus musculus (Mouse).